The following is a 208-amino-acid chain: High frequency lysogenization protein HflD homolog (208 aa).

It belongs to the HflD family.

The protein resides in the cytoplasm. Its subcellular location is the cell inner membrane. In Pseudomonas entomophila (strain L48), this protein is High frequency lysogenization protein HflD homolog.